The primary structure comprises 456 residues: tRNA modification GTPase MnmE (456 aa).

3 residues coordinate (6S)-5-formyl-5,6,7,8-tetrahydrofolate: Arg-23, Glu-80, and Lys-122. In terms of domain architecture, TrmE-type G spans Ala-218–Lys-380. Asn-228 contributes to the K(+) binding site. GTP contacts are provided by residues Asn-228 to Ser-233, Thr-247 to Thr-253, and Asp-272 to Gly-275. A Mg(2+)-binding site is contributed by Ser-232. Thr-247, Leu-249, and Thr-252 together coordinate K(+). Mg(2+) is bound at residue Thr-253. Residue Lys-456 participates in (6S)-5-formyl-5,6,7,8-tetrahydrofolate binding.

It belongs to the TRAFAC class TrmE-Era-EngA-EngB-Septin-like GTPase superfamily. TrmE GTPase family. Homodimer. Heterotetramer of two MnmE and two MnmG subunits. K(+) serves as cofactor.

The protein resides in the cytoplasm. Exhibits a very high intrinsic GTPase hydrolysis rate. Involved in the addition of a carboxymethylaminomethyl (cmnm) group at the wobble position (U34) of certain tRNAs, forming tRNA-cmnm(5)s(2)U34. This chain is tRNA modification GTPase MnmE, found in Buchnera aphidicola subsp. Schizaphis graminum (strain Sg).